The sequence spans 95 residues: Protein K6 (95 aa).

A signal peptide spans 1 to 24; sequence MAPVHVLCCVSVLLATFYLTPTES.

The chain is Protein K6 (K6) from Human herpesvirus 8 type P (isolate GK18) (HHV-8).